A 454-amino-acid polypeptide reads, in one-letter code: CBL-interacting protein kinase 17 (454 aa).

The region spanning 13 to 268 is the Protein kinase domain; sequence YEMGRTLGEG…MAGIKSHEWF (256 aa). Residues 19 to 27 and Lys42 contribute to the ATP site; that span reads LGEGNFGKV. Asp136 (proton acceptor) is an active-site residue. Residues 154 to 183 are activation loop; that stretch reads DFGLSALPQHLGNDGLLHTTCGSPNYIAPE. The NAF domain maps to 304–328; that stretch reads KNSHQINAFQLIGMASSLDLSGFFE. The interval 334 to 363 is PPI; it reads QRRIRFTSTHPPKDAFDKIESSATELGFQV.

This sequence belongs to the protein kinase superfamily. CAMK Ser/Thr protein kinase family. SNF1 subfamily. Mn(2+) serves as cofactor.

It carries out the reaction L-seryl-[protein] + ATP = O-phospho-L-seryl-[protein] + ADP + H(+). The enzyme catalyses L-threonyl-[protein] + ATP = O-phospho-L-threonyl-[protein] + ADP + H(+). Functionally, CIPK serine-threonine protein kinases interact with CBL proteins. Binding of a CBL protein to the regulatory NAF domain of CIPK protein lead to the activation of the kinase in a calcium-dependent manner. The sequence is that of CBL-interacting protein kinase 17 (CIPK17) from Oryza sativa subsp. japonica (Rice).